The following is a 38-amino-acid chain: Phospholipase A2 2 (38 aa).

Residues tyrosine 28, glycine 30, and glycine 32 each coordinate Ca(2+).

This sequence belongs to the phospholipase A2 family. Group I subfamily. Ca(2+) is required as a cofactor. In terms of tissue distribution, expressed by the venom gland.

The protein resides in the secreted. The catalysed reaction is a 1,2-diacyl-sn-glycero-3-phosphocholine + H2O = a 1-acyl-sn-glycero-3-phosphocholine + a fatty acid + H(+). Its function is as follows. Snake venom phospholipase A2 (PLA2) that inhibits neuromuscular transmission by blocking acetylcholine release from the nerve termini. PLA2 catalyzes the calcium-dependent hydrolysis of the 2-acyl groups in 3-sn-phosphoglycerides. This Calliophis bivirgatus (Blue Malaysian coral snake) protein is Phospholipase A2 2.